A 258-amino-acid chain; its full sequence is Snake venom serine protease HS114 (258 aa).

Residues 1–18 (MVLVRVVANLLILQLSYA) form the signal peptide. Residues 19 to 24 (QKVSEL) constitute a propeptide that is removed on maturation. The region spanning 25-249 (VVGGDECNIN…YNTWIESVIA (225 aa)) is the Peptidase S1 domain. Cystine bridges form between C31/C163, C50/C66, C98/C256, C142/C210, C174/C189, and C200/C225. N-linked (GlcNAc...) asparagine glycosylation is present at N44. Catalysis depends on charge relay system residues H65 and D110. S204 functions as the Charge relay system in the catalytic mechanism.

It belongs to the peptidase S1 family. Snake venom subfamily. As to quaternary structure, monomer. Post-translationally, N-glycosylated. Contains approximately 10% carbohydrates. In terms of tissue distribution, expressed by the venom gland.

It is found in the secreted. With respect to regulation, inhibited by benzamidine, PMSF, leupeptin, SDS and DTT, but not by EDTA, and commercial antivenom. Functionally, snake venom serine protease that shows non-specific action on fibrinogen. It preferentially degrades fibrinogen Aalpha (FGA), releasing fibrinopeptide A, and shows a lower activity on fibrinogen Bbeta (FGB), releasing fibrinopeptide B and other uncommon fibrinopeptides. Also shows low fibrinolytic activity compared to plasmin. Has high enzymatic activity on the substrates for activated protein C and factor XIa, and for thrombin. Shows a wide activity spectrum at different peptide sequences, with a preferential cleavage at Lys-|-Xaa over Arg-|-Xaa bonds. The polypeptide is Snake venom serine protease HS114 (Bothrops jararaca (Jararaca)).